Consider the following 217-residue polypeptide: Growth hormone variant (217 aa).

A signal peptide spans 1 to 26 (MAAGSRTSLLLAFGLLCLSWLQEGSA). 2 disulfide bridges follow: cysteine 79–cysteine 191 and cysteine 208–cysteine 215. A Phosphoserine modification is found at serine 132. N-linked (GlcNAc...) asparagine glycosylation is present at asparagine 166. Serine 176 is subject to Phosphoserine.

This sequence belongs to the somatotropin/prolactin family. In terms of assembly, monomer, dimer, trimer, tetramer and pentamer, disulfide-linked or non-covalently associated, in homomeric and heteromeric combinations. Can also form a complex either with GHBP or with the alpha2-macroglobulin complex. As to expression, expressed in the placenta.

The protein resides in the secreted. Plays an important role in growth control. Its major role in stimulating body growth is to stimulate the liver and other tissues to secrete IGF1. It stimulates both the differentiation and proliferation of myoblasts. It also stimulates amino acid uptake and protein synthesis in muscle and other tissues. The protein is Growth hormone variant (GH2) of Homo sapiens (Human).